Here is a 518-residue protein sequence, read N- to C-terminus: Tropomyosin-1, isoforms 33/34 (518 aa).

Positions 14-267 (DKDGALERAL…DDLIVEKERY (254 aa)) form a coiled coil. 2 disordered regions span residues 101-125 (RSEERLGSATAKLSEASQAADESER) and 288-518 (FWNP…APPA). Residues 293-305 (NPKPPTPKLPTPT) show a composition bias toward pro residues. A compositionally biased stretch (low complexity) spans 318–348 (AAEAAAAAEAEAAEAAAAAGEAGPDGAPAAP). 2 stretches are compositionally biased toward pro residues: residues 357 to 374 (EPTPPKEPTPPPPPPPPF) and 394 to 405 (EPPPPGSEPEPV). Positions 406–518 (PAAEGEAAPA…AAAEGEAPPA (113 aa)) are enriched in low complexity.

The protein belongs to the tropomyosin family. In terms of assembly, homodimer. In terms of tissue distribution, both isoforms are only expressed in indirect flight muscles.

The protein localises to the cytoplasm. The protein resides in the cytoskeleton. Tropomyosin, in association with the troponin complex, plays a central role in the calcium dependent regulation of muscle contraction. The polypeptide is Tropomyosin-1, isoforms 33/34 (Tm1) (Drosophila melanogaster (Fruit fly)).